Here is a 296-residue protein sequence, read N- to C-terminus: 4-hydroxy-tetrahydrodipicolinate synthase (296 aa).

Thr49 contributes to the pyruvate binding site. The Proton donor/acceptor role is filled by Tyr137. Lys166 functions as the Schiff-base intermediate with substrate in the catalytic mechanism. Residue Ile208 participates in pyruvate binding.

Belongs to the DapA family. As to quaternary structure, homotetramer; dimer of dimers.

Its subcellular location is the cytoplasm. The enzyme catalyses L-aspartate 4-semialdehyde + pyruvate = (2S,4S)-4-hydroxy-2,3,4,5-tetrahydrodipicolinate + H2O + H(+). It participates in amino-acid biosynthesis; L-lysine biosynthesis via DAP pathway; (S)-tetrahydrodipicolinate from L-aspartate: step 3/4. Functionally, catalyzes the condensation of (S)-aspartate-beta-semialdehyde [(S)-ASA] and pyruvate to 4-hydroxy-tetrahydrodipicolinate (HTPA). The sequence is that of 4-hydroxy-tetrahydrodipicolinate synthase from Chlorobaculum parvum (strain DSM 263 / NCIMB 8327) (Chlorobium vibrioforme subsp. thiosulfatophilum).